We begin with the raw amino-acid sequence, 113 residues long: UPF0251 protein TK0562 (113 aa).

Belongs to the UPF0251 family.

The chain is UPF0251 protein TK0562 from Thermococcus kodakarensis (strain ATCC BAA-918 / JCM 12380 / KOD1) (Pyrococcus kodakaraensis (strain KOD1)).